The chain runs to 179 residues: Large ribosomal subunit protein uL6 (179 aa).

Belongs to the universal ribosomal protein uL6 family. In terms of assembly, part of the 50S ribosomal subunit.

Functionally, this protein binds to the 23S rRNA, and is important in its secondary structure. It is located near the subunit interface in the base of the L7/L12 stalk, and near the tRNA binding site of the peptidyltransferase center. This chain is Large ribosomal subunit protein uL6, found in Synechococcus elongatus (strain ATCC 33912 / PCC 7942 / FACHB-805) (Anacystis nidulans R2).